The primary structure comprises 199 residues: MVLFSEDHIQETRRRGRIEVICGSMFSGKTEELIRRMKRAKFARQRVEIFKPAIDTRYSEEDVVSHDSHSIASTPIDSSASILLFTSEIDVVGIDEAQFFDDGLIDVCRQLANNGIRVIIAGLDMDFKGNPFGPMPQLCAIADEVSKVHAICVKCGDLASFSHRTVKNDKQVLLGETAEYEPLCRECYLRARGEDGQKI.

Residues 23 to 30 and 95 to 98 each bind ATP; these read GSMFSGKT and DEAQ. E96 serves as the catalytic Proton acceptor. Residues C152, C155, C184, and C187 each contribute to the Zn(2+) site.

Belongs to the thymidine kinase family. Homotetramer.

The protein localises to the cytoplasm. It carries out the reaction thymidine + ATP = dTMP + ADP + H(+). This Bacteroides thetaiotaomicron (strain ATCC 29148 / DSM 2079 / JCM 5827 / CCUG 10774 / NCTC 10582 / VPI-5482 / E50) protein is Thymidine kinase.